A 363-amino-acid polypeptide reads, in one-letter code: Protein RecA (363 aa).

ATP is bound at residue Gly79–Thr86.

Belongs to the RecA family.

Its subcellular location is the cytoplasm. Can catalyze the hydrolysis of ATP in the presence of single-stranded DNA, the ATP-dependent uptake of single-stranded DNA by duplex DNA, and the ATP-dependent hybridization of homologous single-stranded DNAs. It interacts with LexA causing its activation and leading to its autocatalytic cleavage. The chain is Protein RecA from Methylobacterium sp. (strain 4-46).